Here is a 1521-residue protein sequence, read N- to C-terminus: Protein OPAQUE1 (1521 aa).

One can recognise a Myosin N-terminal SH3-like domain in the interval 4-53 (RKGLKVWVEEKGEGWVEAEVVEAKERAVVVFSSQRKKITVSPEKLLPRDT). Positions 60–731 (GHVDDMTKLT…QIAILDMRRA (672 aa)) constitute a Myosin motor domain. ATP is bound by residues 155 to 162 (GESGAGKT) and 208 to 216 (NDNSSRFGK). Actin-binding regions lie at residues 493–527 (LIEKKPIGIIALLDEACMFPKSTHETFATKMFRNF), 529–552 (SHLRLERTKFSETDFTISHYAGKV), 587–612 (FTSLPEESIRSSYKFSSVASRFKLQL), and 612–634 (LQALMETLNSTEPHYVRCVKPNS). IQ domains are found at residues 733 to 755 (ILDNAARHIQGRFRTFITRKEFV), 756 to 778 (KTREASISIQAYCRGCLARKMFA), 781 to 803 (RETAAAVIVQKYVRRWLLRRAHL), 804 to 826 (QACLAALLIQSYIRGFIARRYFS), 829 to 851 (REHKAATVIQSTWRRRKFVILFQ), and 852 to 874 (NYRQATVAIQCSWRQKLARKELR). Coiled coils occupy residues 870 to 910 (RKEL…ERRL) and 974 to 1050 (SAEA…LRQK). Residues 1162–1459 (DHVIEAINDV…VAAMREMVNK (298 aa)) enclose the Dilute domain.

It belongs to the TRAFAC class myosin-kinesin ATPase superfamily. Myosin family. Plant myosin class XI subfamily. As to quaternary structure, interacts (via C-terminus) with HIP (via C-terminus), but not with zeins, FL1 or intrinsic proteins of protein bodies. In terms of tissue distribution, high expression in kernels and stems, intermediate in ears and leaves, and low in roots, silks and tassels.

The protein localises to the cytoplasm. Myosin XI motor protein required for endoplasmic reticulum motility and protein body formation. May function by binding with its tail domain to receptor proteins on membranes and exerting force with its N-terminal motor domain against actin filaments, thereby transporting its cargo along polarized actin cables. This is Protein OPAQUE1 from Zea mays (Maize).